Reading from the N-terminus, the 349-residue chain is Isopentenyl-diphosphate delta-isomerase (349 aa).

Substrate is bound at residue 9 to 10 (RK). FMN contacts are provided by residues 65–67 (AMT), serine 95, and asparagine 124. Residue 95-97 (STH) participates in substrate binding. Glutamine 154 serves as a coordination point for substrate. Glutamate 155 is a Mg(2+) binding site. FMN is bound by residues lysine 186, serine 211, threonine 216, 262–264 (GVR), and 283–284 (SR).

Belongs to the IPP isomerase type 2 family. Homooctamer. Dimer of tetramers. It depends on FMN as a cofactor. Requires NADPH as cofactor. The cofactor is Mg(2+).

It is found in the cytoplasm. It carries out the reaction isopentenyl diphosphate = dimethylallyl diphosphate. Functionally, involved in the biosynthesis of isoprenoids. Catalyzes the 1,3-allylic rearrangement of the homoallylic substrate isopentenyl (IPP) to its allylic isomer, dimethylallyl diphosphate (DMAPP). This is Isopentenyl-diphosphate delta-isomerase from Staphylococcus haemolyticus (strain JCSC1435).